The primary structure comprises 137 residues: DNA polymerase III subunit psi (137 aa).

This sequence belongs to the DNA polymerase III psi/HolD chain family. In terms of assembly, the DNA polymerase III holoenzyme complex contains at least 10 different subunits organized into 3 functionally essential subassemblies: the Pol III core, the beta sliding clamp processivity factor and the clamp-loading complex. The Pol III core (subunits alpha, epsilon and theta) contains the polymerase and the 3'-5' exonuclease proofreading activities. The polymerase is tethered to the template via the dimeric beta sliding clamp processivity factor. The clamp-loading complex (also called gamma complex) assembles the beta sliding clamp onto the primed template and plays a central role in the organization and communication at the replication fork. The clamp-loading complex contains delta, delta', psi and chi, and 3 copies of either or both of two different DnaX proteins, gamma and tau. The DNA replisome complex has a single clamp loader (3 tau and 1 each of delta, delta', psi and chi subunits) which binds 3 Pol III cores (1 core on the leading strand and 2 on the lagging strand) each with a beta sliding clamp dimer. Additional proteins in the replisome are other copies of gamma, psi (this protein) and chi (holC), SSB, DNA helicase and RNA primase. The clamp loader hydrolyzes ATP to assemble the beta processivity factor onto the primed template and plays a central role in the organization and communication at the replication fork. Interacts directly with the chi subunit (holC).

It carries out the reaction DNA(n) + a 2'-deoxyribonucleoside 5'-triphosphate = DNA(n+1) + diphosphate. Functionally, part of the beta sliding clamp loading complex, which hydrolyzes ATP to load the beta clamp onto primed DNA to form the DNA replication pre-initiation complex. DNA polymerase III is a complex, multichain enzyme responsible for most of the replicative synthesis in bacteria. This DNA polymerase also exhibits 3' to 5' exonuclease activity. This chain is DNA polymerase III subunit psi, found in Escherichia coli (strain K12).